The chain runs to 87 residues: Small ribosomal subunit protein uS17 (87 aa).

The protein belongs to the universal ribosomal protein uS17 family. In terms of assembly, part of the 30S ribosomal subunit.

In terms of biological role, one of the primary rRNA binding proteins, it binds specifically to the 5'-end of 16S ribosomal RNA. The sequence is that of Small ribosomal subunit protein uS17 from Alkalilimnicola ehrlichii (strain ATCC BAA-1101 / DSM 17681 / MLHE-1).